The following is a 350-amino-acid chain: tRNA uridine(34) hydroxylase (350 aa).

In terms of domain architecture, Rhodanese spans 146 to 240 (DDPDALFIDM…YARKAREQGL (95 aa)). Cysteine 200 functions as the Cysteine persulfide intermediate in the catalytic mechanism.

Belongs to the TrhO family.

It carries out the reaction uridine(34) in tRNA + AH2 + O2 = 5-hydroxyuridine(34) in tRNA + A + H2O. In terms of biological role, catalyzes oxygen-dependent 5-hydroxyuridine (ho5U) modification at position 34 in tRNAs. This is tRNA uridine(34) hydroxylase from Shigella sonnei (strain Ss046).